We begin with the raw amino-acid sequence, 296 residues long: Polyamine aminopropyltransferase (296 aa).

One can recognise a PABS domain in the interval 5-238 (ELWYETLHAN…GIMTFAWATQ (234 aa)). Glutamine 33 is an S-methyl-5'-thioadenosine binding site. Spermidine contacts are provided by histidine 64 and aspartate 88. S-methyl-5'-thioadenosine contacts are provided by residues glutamate 108 and 140-141 (DG). Residue aspartate 158 is the Proton acceptor of the active site. 158–161 (DCTD) lines the spermidine pocket. Proline 165 lines the S-methyl-5'-thioadenosine pocket.

This sequence belongs to the spermidine/spermine synthase family. In terms of assembly, homodimer or homotetramer.

It localises to the cytoplasm. It carries out the reaction S-adenosyl 3-(methylsulfanyl)propylamine + putrescine = S-methyl-5'-thioadenosine + spermidine + H(+). The protein operates within amine and polyamine biosynthesis; spermidine biosynthesis; spermidine from putrescine: step 1/1. Its function is as follows. Catalyzes the irreversible transfer of a propylamine group from the amino donor S-adenosylmethioninamine (decarboxy-AdoMet) to putrescine (1,4-diaminobutane) to yield spermidine. This Yersinia pseudotuberculosis serotype O:3 (strain YPIII) protein is Polyamine aminopropyltransferase.